The primary structure comprises 218 residues: Pyridoxine/pyridoxamine 5'-phosphate oxidase (218 aa).

Substrate is bound by residues 14-17 and Lys72; that span reads RREY. Residues 67 to 72, 82 to 83, Arg88, Lys89, and Gln111 contribute to the FMN site; these read RIVLLK and YT. Substrate-binding residues include Tyr129, Arg133, and Ser137. Residues 146 to 147 and Trp191 contribute to the FMN site; that span reads QS. Position 197–199 (197–199) interacts with substrate; the sequence is RLH. Arg201 contacts FMN.

It belongs to the pyridoxamine 5'-phosphate oxidase family. Homodimer. It depends on FMN as a cofactor.

It carries out the reaction pyridoxamine 5'-phosphate + O2 + H2O = pyridoxal 5'-phosphate + H2O2 + NH4(+). The enzyme catalyses pyridoxine 5'-phosphate + O2 = pyridoxal 5'-phosphate + H2O2. Its pathway is cofactor metabolism; pyridoxal 5'-phosphate salvage; pyridoxal 5'-phosphate from pyridoxamine 5'-phosphate: step 1/1. It participates in cofactor metabolism; pyridoxal 5'-phosphate salvage; pyridoxal 5'-phosphate from pyridoxine 5'-phosphate: step 1/1. Its function is as follows. Catalyzes the oxidation of either pyridoxine 5'-phosphate (PNP) or pyridoxamine 5'-phosphate (PMP) into pyridoxal 5'-phosphate (PLP). This is Pyridoxine/pyridoxamine 5'-phosphate oxidase from Citrobacter koseri (strain ATCC BAA-895 / CDC 4225-83 / SGSC4696).